Consider the following 388-residue polypeptide: 3-dehydroquinate synthase (388 aa).

This sequence belongs to the archaeal-type DHQ synthase family.

The catalysed reaction is 2-amino-2,3,7-trideoxy-D-lyxo-hept-6-ulosonate + NAD(+) + H2O = 3-dehydroquinate + NH4(+) + NADH + H(+). Functionally, catalyzes the oxidative deamination and cyclization of 2-amino-3,7-dideoxy-D-threo-hept-6-ulosonic acid (ADH) to yield 3-dehydroquinate (DHQ), which is fed into the canonical shikimic pathway of aromatic amino acid biosynthesis. This chain is 3-dehydroquinate synthase, found in Haloarcula marismortui (strain ATCC 43049 / DSM 3752 / JCM 8966 / VKM B-1809) (Halobacterium marismortui).